The following is a 237-amino-acid chain: uncharacterized protein (237 aa).

Positions 3–116 constitute a Response regulatory domain; the sequence is SALLIDDERF…RLAKTVQRLL (114 aa). The residue at position 54 (Asp54) is a 4-aspartylphosphate. Residues 135 to 236 enclose the HTH LytTR-type domain; the sequence is IPCTGLNRIV…LKELKEMLGF (102 aa).

This is an uncharacterized protein from Vibrio cholerae serotype O1 (strain ATCC 39315 / El Tor Inaba N16961).